The chain runs to 183 residues: MQMDWLFIAVISGIGLLSSGVPGTQGAYTTEQCRALNGSCNFYACFPKNVIIGKCDWWGWSCCARTPLERCTAKKGTCTKTGCTKTDTDHGPCDGGAQCCQRDPVKYCKFHGNVCGRGKCPMDHIPIGEQCMPGYPCCKRDGPAYCKSKGGKCLRRCSQIVPTDIIGVCADGVPCCKSRQSTG.

Positions 1–26 (MQMDWLFIAVISGIGLLSSGVPGTQG) are cleaved as a signal peptide. The C(6)C(4)C(9)C(6)CC 1; approximate repeat unit spans residues 27–64 (AYTTEQCRALNGSCNFYACFPKNVIIGKCDWWGWSCCA). Residues 65 to 101 (RTPLERCTAKKGTCTKTGCTKTDTDHGPCDGGAQCCQ) form a C(6)C(4)C(9)C(6)CC 2; approximate repeat. One copy of the C(6)C(4)C(9)C(6)CC 3; approximate repeat lies at 102–139 (RDPVKYCKFHGNVCGRGKCPMDHIPIGEQCMPGYPCCK). The stretch at 140–177 (RDGPAYCKSKGGKCLRRCSQIVPTDIIGVCADGVPCCK) is one C(6)C(4)C(9)C(6)CC 4; approximate repeat.

The protein belongs to the beta-defensin family. Helofensin subfamily. Expressed by the mandibular venom gland.

The protein localises to the secreted. In terms of biological role, lethal toxin which possesses an inhibitory effect on direct electrical stimulation of the isolated hemi-diaphragm of mice. Neither hemorrhagic nor hemolytic activities are detected. Phospholipase A2 activity, proteolytic activity and arginine esterolytic activity are absent. This chain is Helofensin-2, found in Heloderma suspectum cinctum (Banded Gila monster).